The primary structure comprises 291 residues: Phosphatidylglycerol--prolipoprotein diacylglyceryl transferase (291 aa).

7 consecutive transmembrane segments (helical) span residues V21–A41, L60–Y80, W96–F116, F130–G150, S198–I218, G225–F245, and I260–W280. Position 143 (R143) interacts with a 1,2-diacyl-sn-glycero-3-phospho-(1'-sn-glycerol).

The protein belongs to the Lgt family.

The protein localises to the cell inner membrane. The enzyme catalyses L-cysteinyl-[prolipoprotein] + a 1,2-diacyl-sn-glycero-3-phospho-(1'-sn-glycerol) = an S-1,2-diacyl-sn-glyceryl-L-cysteinyl-[prolipoprotein] + sn-glycerol 1-phosphate + H(+). Its pathway is protein modification; lipoprotein biosynthesis (diacylglyceryl transfer). Catalyzes the transfer of the diacylglyceryl group from phosphatidylglycerol to the sulfhydryl group of the N-terminal cysteine of a prolipoprotein, the first step in the formation of mature lipoproteins. The protein is Phosphatidylglycerol--prolipoprotein diacylglyceryl transferase of Salmonella agona (strain SL483).